A 511-amino-acid polypeptide reads, in one-letter code: Bifunctional purine biosynthesis protein PurH (511 aa).

Residues 1-145 form the MGS-like domain; that stretch reads MKKRALVSVS…KNHKFVSVIV (145 aa).

It belongs to the PurH family.

The catalysed reaction is (6R)-10-formyltetrahydrofolate + 5-amino-1-(5-phospho-beta-D-ribosyl)imidazole-4-carboxamide = 5-formamido-1-(5-phospho-D-ribosyl)imidazole-4-carboxamide + (6S)-5,6,7,8-tetrahydrofolate. It carries out the reaction IMP + H2O = 5-formamido-1-(5-phospho-D-ribosyl)imidazole-4-carboxamide. It participates in purine metabolism; IMP biosynthesis via de novo pathway; 5-formamido-1-(5-phospho-D-ribosyl)imidazole-4-carboxamide from 5-amino-1-(5-phospho-D-ribosyl)imidazole-4-carboxamide (10-formyl THF route): step 1/1. Its pathway is purine metabolism; IMP biosynthesis via de novo pathway; IMP from 5-formamido-1-(5-phospho-D-ribosyl)imidazole-4-carboxamide: step 1/1. The protein is Bifunctional purine biosynthesis protein PurH of Bacillus mycoides (strain KBAB4) (Bacillus weihenstephanensis).